A 182-amino-acid chain; its full sequence is Crossover junction endodeoxyribonuclease RuvC (182 aa).

Active-site residues include aspartate 7, glutamate 67, and aspartate 139. Mg(2+) is bound by residues aspartate 7, glutamate 67, and aspartate 139.

This sequence belongs to the RuvC family. As to quaternary structure, homodimer which binds Holliday junction (HJ) DNA. The HJ becomes 2-fold symmetrical on binding to RuvC with unstacked arms; it has a different conformation from HJ DNA in complex with RuvA. In the full resolvosome a probable DNA-RuvA(4)-RuvB(12)-RuvC(2) complex forms which resolves the HJ. Requires Mg(2+) as cofactor.

The protein localises to the cytoplasm. It catalyses the reaction Endonucleolytic cleavage at a junction such as a reciprocal single-stranded crossover between two homologous DNA duplexes (Holliday junction).. In terms of biological role, the RuvA-RuvB-RuvC complex processes Holliday junction (HJ) DNA during genetic recombination and DNA repair. Endonuclease that resolves HJ intermediates. Cleaves cruciform DNA by making single-stranded nicks across the HJ at symmetrical positions within the homologous arms, yielding a 5'-phosphate and a 3'-hydroxyl group; requires a central core of homology in the junction. The consensus cleavage sequence is 5'-(A/T)TT(C/G)-3'. Cleavage occurs on the 3'-side of the TT dinucleotide at the point of strand exchange. HJ branch migration catalyzed by RuvA-RuvB allows RuvC to scan DNA until it finds its consensus sequence, where it cleaves and resolves the cruciform DNA. This chain is Crossover junction endodeoxyribonuclease RuvC, found in Bordetella petrii (strain ATCC BAA-461 / DSM 12804 / CCUG 43448).